Consider the following 153-residue polypeptide: Fimbrial protein EcpC (153 aa).

Positions 1 to 8 are cleaved as a propeptide — leader sequence; it reads MLKQVQKG. Position 9 is an N-methylphenylalanine (F9). The helical transmembrane segment at 9 to 29 threads the bilayer; the sequence is FTLIELMIVIAIIGILAAIAL. C130 and C143 are oxidised to a cystine.

Belongs to the N-Me-Phe pilin family.

It localises to the fimbrium. The protein localises to the membrane. This Eikenella corrodens protein is Fimbrial protein EcpC (ecpC).